The following is a 444-amino-acid chain: C4-dicarboxylate transport protein (444 aa).

Helical transmembrane passes span 18–40 (FYSH…GHFY), 53–75 (AFIK…TGIA), 90–112 (AMLY…ANVV), 142–159 (IVGF…GAFA), 163–180 (ILQV…LAMV), 201–222 (LVAI…FTIG), 232–254 (LAML…LGAV), 327–349 (LFIA…LLVA), and 364–386 (FITL…ALIL).

This sequence belongs to the dicarboxylate/amino acid:cation symporter (DAACS) (TC 2.A.23) family.

It is found in the cell inner membrane. Responsible for the transport of dicarboxylates such as succinate, fumarate, and malate from the periplasm across the inner membrane. This transport system plays an important role in the energy supply of rhizobium-legume symbionts. In Rhizobium leguminosarum, this protein is C4-dicarboxylate transport protein (dctA).